Here is a 79-residue protein sequence, read N- to C-terminus: MNSINADLLYISAAIIMGFASIGAAIGIGILGGKFLEGAARQPDLIPTLRTQFFIVMGLVDAIPMISVGLGLYLIFAAS.

2 consecutive transmembrane segments (helical) span residues 11 to 31 and 55 to 75; these read ISAAIIMGFASIGAAIGIGIL and IVMGLVDAIPMISVGLGLYLI.

This sequence belongs to the ATPase C chain family. In terms of assembly, F-type ATPases have 2 components, F(1) - the catalytic core - and F(0) - the membrane proton channel. F(1) has five subunits: alpha(3), beta(3), gamma(1), delta(1), epsilon(1). F(0) has three main subunits: a(1), b(2) and c(10-14). The alpha and beta chains form an alternating ring which encloses part of the gamma chain. F(1) is attached to F(0) by a central stalk formed by the gamma and epsilon chains, while a peripheral stalk is formed by the delta and b chains.

Its subcellular location is the cell membrane. In terms of biological role, f(1)F(0) ATP synthase produces ATP from ADP in the presence of a proton or sodium gradient. F-type ATPases consist of two structural domains, F(1) containing the extramembraneous catalytic core and F(0) containing the membrane proton channel, linked together by a central stalk and a peripheral stalk. During catalysis, ATP synthesis in the catalytic domain of F(1) is coupled via a rotary mechanism of the central stalk subunits to proton translocation. Functionally, key component of the F(0) channel; it plays a direct role in translocation across the membrane. A homomeric c-ring of between 10-14 subunits forms the central stalk rotor element with the F(1) delta and epsilon subunits. This chain is ATP synthase subunit c, found in Wigglesworthia glossinidia brevipalpis.